The sequence spans 106 residues: PTS system fructose-like EIIB component 2 (106 aa).

In terms of domain architecture, PTS EIIB type-2 spans 1-103 (MTKIIAVTAC…IMSKIEAHLA (103 aa)). Catalysis depends on C10, which acts as the Phosphocysteine intermediate. C10 is subject to Phosphocysteine; by EIIA.

It localises to the cytoplasm. The catalysed reaction is D-fructose(out) + N(pros)-phospho-L-histidyl-[protein] = D-fructose 1-phosphate(in) + L-histidyl-[protein]. Functionally, the phosphoenolpyruvate-dependent sugar phosphotransferase system (sugar PTS), a major carbohydrate active transport system, catalyzes the phosphorylation of incoming sugar substrates concomitantly with their translocation across the cell membrane. The enzyme II FrwABC PTS system is involved in fructose transport. The sequence is that of PTS system fructose-like EIIB component 2 (frwB) from Escherichia coli O157:H7.